The sequence spans 72 residues: Protein kish-A (72 aa).

The first 26 residues, methionine 1–serine 26, serve as a signal peptide directing secretion. Residues leucine 27 to lysine 53 lie on the Extracellular side of the membrane. Asparagine 35 carries N-linked (GlcNAc...) asparagine glycosylation. Residues serine 54 to isoleucine 71 traverse the membrane as a helical segment. A topological domain (cytoplasmic) is located at residue glutamine 72.

It belongs to the KISH family.

It localises to the golgi apparatus membrane. Involved in the early part of the secretory pathway. The protein is Protein kish-A (Tmem167a) of Mus musculus (Mouse).